The sequence spans 315 residues: 2-oxoglutarate and iron-dependent oxygenase domain-containing protein 3 (315 aa).

Residues M1–L31 form a disordered region. The Cytoplasmic portion of the chain corresponds to M1–R41. Residues A18–L31 are compositionally biased toward basic and acidic residues. The chain crosses the membrane as a helical; Signal-anchor for type II membrane protein span at residues I42–I62. Over D63 to T315 the chain is Lumenal. The region spanning K203–P305 is the Fe2OG dioxygenase domain. Residue N211 is glycosylated (N-linked (GlcNAc...) asparagine). Fe cation contacts are provided by H226 and D228. The N-linked (GlcNAc...) asparagine glycan is linked to N263. H284 lines the Fe cation pocket. The active site involves R294. R294 is a 2-oxoglutarate binding site.

It belongs to the OGFOD3 family. Requires Fe(2+) as cofactor. It depends on L-ascorbate as a cofactor.

Its subcellular location is the membrane. This Mus musculus (Mouse) protein is 2-oxoglutarate and iron-dependent oxygenase domain-containing protein 3 (Ogfod3).